Reading from the N-terminus, the 159-residue chain is Serine-protein kinase RsbW (159 aa).

The protein belongs to the anti-sigma-factor family.

It catalyses the reaction L-seryl-[protein] + ATP = O-phospho-L-seryl-[protein] + ADP + H(+). The catalysed reaction is L-threonyl-[protein] + ATP = O-phospho-L-threonyl-[protein] + ADP + H(+). Its function is as follows. Negative regulator of sigma-B activity. Phosphorylates and inactivates its specific antagonist protein, RsbV. Upon phosphorylation of RsbV, RsbW is released and binds to sigma-B, thereby blocking its ability to form an RNA polymerase holoenzyme (E-sigma-B). This chain is Serine-protein kinase RsbW, found in Staphylococcus aureus (strain Newman).